We begin with the raw amino-acid sequence, 533 residues long: 2,3-bisphosphoglycerate-independent phosphoglycerate mutase (533 aa).

2 residues coordinate Mn(2+): Asp-15 and Ser-65. Ser-65 functions as the Phosphoserine intermediate in the catalytic mechanism. Residues His-126, 156 to 157, Arg-188, Arg-194, 258 to 261, and Lys-331 contribute to the substrate site; these read RD and RPDR. Asp-398, His-402, Asp-439, His-440, and His-457 together coordinate Mn(2+).

It belongs to the BPG-independent phosphoglycerate mutase family. Monomer. The cofactor is Mn(2+).

The enzyme catalyses (2R)-2-phosphoglycerate = (2R)-3-phosphoglycerate. It functions in the pathway carbohydrate degradation; glycolysis; pyruvate from D-glyceraldehyde 3-phosphate: step 3/5. Catalyzes the interconversion of 2-phosphoglycerate and 3-phosphoglycerate. The chain is 2,3-bisphosphoglycerate-independent phosphoglycerate mutase from Nostoc sp. (strain PCC 7120 / SAG 25.82 / UTEX 2576).